The sequence spans 270 residues: Putative pyruvate, phosphate dikinase regulatory protein (270 aa).

Residue 151-158 (GVSRTSKT) participates in ADP binding.

Belongs to the pyruvate, phosphate/water dikinase regulatory protein family. PDRP subfamily.

The enzyme catalyses N(tele)-phospho-L-histidyl/L-threonyl-[pyruvate, phosphate dikinase] + ADP = N(tele)-phospho-L-histidyl/O-phospho-L-threonyl-[pyruvate, phosphate dikinase] + AMP + H(+). It catalyses the reaction N(tele)-phospho-L-histidyl/O-phospho-L-threonyl-[pyruvate, phosphate dikinase] + phosphate + H(+) = N(tele)-phospho-L-histidyl/L-threonyl-[pyruvate, phosphate dikinase] + diphosphate. Bifunctional serine/threonine kinase and phosphorylase involved in the regulation of the pyruvate, phosphate dikinase (PPDK) by catalyzing its phosphorylation/dephosphorylation. This chain is Putative pyruvate, phosphate dikinase regulatory protein, found in Lysinibacillus sphaericus (strain C3-41).